A 590-amino-acid polypeptide reads, in one-letter code: Aspartate--tRNA(Asp/Asn) ligase (590 aa).

Residue Glu169 participates in L-aspartate binding. The interval 193–196 is aspartate; it reads QLFK. Arg215 provides a ligand contact to L-aspartate. Residues 215 to 217 and Gln224 each bind ATP; that span reads RDE. His447 contributes to the L-aspartate binding site. Residue Glu479 participates in ATP binding. An L-aspartate-binding site is contributed by Arg486. 531-534 is a binding site for ATP; sequence GWDR. The tract at residues 556 to 590 is disordered; it reads GGFDPLTAAPAPITPEQRKEAGVDARPQQDLPPQS.

The protein belongs to the class-II aminoacyl-tRNA synthetase family. Type 1 subfamily. In terms of assembly, homodimer.

The protein localises to the cytoplasm. It carries out the reaction tRNA(Asx) + L-aspartate + ATP = L-aspartyl-tRNA(Asx) + AMP + diphosphate. Aspartyl-tRNA synthetase with relaxed tRNA specificity since it is able to aspartylate not only its cognate tRNA(Asp) but also tRNA(Asn). Reaction proceeds in two steps: L-aspartate is first activated by ATP to form Asp-AMP and then transferred to the acceptor end of tRNA(Asp/Asn). This chain is Aspartate--tRNA(Asp/Asn) ligase, found in Nocardioides sp. (strain ATCC BAA-499 / JS614).